The sequence spans 292 residues: NAD kinase (292 aa).

The active-site Proton acceptor is aspartate 72. NAD(+) is bound by residues 72-73 (DG), 146-147 (NE), histidine 157, arginine 174, aspartate 176, and 187-192 (TAYALS).

Belongs to the NAD kinase family. The cofactor is a divalent metal cation.

The protein localises to the cytoplasm. It carries out the reaction NAD(+) + ATP = ADP + NADP(+) + H(+). In terms of biological role, involved in the regulation of the intracellular balance of NAD and NADP, and is a key enzyme in the biosynthesis of NADP. Catalyzes specifically the phosphorylation on 2'-hydroxyl of the adenosine moiety of NAD to yield NADP. The chain is NAD kinase from Shewanella oneidensis (strain ATCC 700550 / JCM 31522 / CIP 106686 / LMG 19005 / NCIMB 14063 / MR-1).